The primary structure comprises 195 residues: Protein GrpE (195 aa).

It belongs to the GrpE family. Homodimer.

It is found in the cytoplasm. In terms of biological role, participates actively in the response to hyperosmotic and heat shock by preventing the aggregation of stress-denatured proteins, in association with DnaK and GrpE. It is the nucleotide exchange factor for DnaK and may function as a thermosensor. Unfolded proteins bind initially to DnaJ; upon interaction with the DnaJ-bound protein, DnaK hydrolyzes its bound ATP, resulting in the formation of a stable complex. GrpE releases ADP from DnaK; ATP binding to DnaK triggers the release of the substrate protein, thus completing the reaction cycle. Several rounds of ATP-dependent interactions between DnaJ, DnaK and GrpE are required for fully efficient folding. The polypeptide is Protein GrpE (Francisella tularensis subsp. holarctica (strain FTNF002-00 / FTA)).